The sequence spans 292 residues: Glutamate racemase (292 aa).

Substrate contacts are provided by residues 10–11 (DS) and 42–43 (YG). Residue Cys-73 is the Proton donor/acceptor of the active site. Substrate is bound at residue 74–75 (NS). Cys-186 (proton donor/acceptor) is an active-site residue. 187-188 (TH) is a substrate binding site.

It belongs to the aspartate/glutamate racemases family.

It catalyses the reaction L-glutamate = D-glutamate. It participates in cell wall biogenesis; peptidoglycan biosynthesis. Provides the (R)-glutamate required for cell wall biosynthesis. The protein is Glutamate racemase of Beutenbergia cavernae (strain ATCC BAA-8 / DSM 12333 / CCUG 43141 / JCM 11478 / NBRC 16432 / NCIMB 13614 / HKI 0122).